We begin with the raw amino-acid sequence, 256 residues long: Triosephosphate isomerase (256 aa).

N12–K14 is a substrate binding site. H99 serves as the catalytic Electrophile. E169 acts as the Proton acceptor in catalysis. Substrate contacts are provided by residues G175, S214, and G235–G236.

It belongs to the triosephosphate isomerase family. Homodimer.

Its subcellular location is the cytoplasm. It catalyses the reaction D-glyceraldehyde 3-phosphate = dihydroxyacetone phosphate. It functions in the pathway carbohydrate biosynthesis; gluconeogenesis. Its pathway is carbohydrate degradation; glycolysis; D-glyceraldehyde 3-phosphate from glycerone phosphate: step 1/1. Functionally, involved in the gluconeogenesis. Catalyzes stereospecifically the conversion of dihydroxyacetone phosphate (DHAP) to D-glyceraldehyde-3-phosphate (G3P). This is Triosephosphate isomerase from Rhizobium meliloti (strain 1021) (Ensifer meliloti).